We begin with the raw amino-acid sequence, 505 residues long: Salutaridine synthase (505 aa).

The chain crosses the membrane as a helical span at residues 10 to 30 (DFWMIACTVIIVFALVKFMFS). Residue Cys444 participates in heme binding.

Belongs to the cytochrome P450 family. The cofactor is heme.

The protein resides in the endoplasmic reticulum membrane. The catalysed reaction is (R)-reticuline + reduced [NADPH--hemoprotein reductase] + O2 = salutaridine + oxidized [NADPH--hemoprotein reductase] + 2 H2O + H(+). In terms of biological role, cytochrome P450 monooxygenase involved in biosynthesis of morphinan-type benzylisoquinoline and opiate alkaloids natural products. Catalyzes the formation of the morphinan alkaloid salutaridine by intramolecular phenol oxidation of (R)-reticuline without the incorporation of oxygen into the product. Can also use (R)-norreticuline as substrate. In Papaver somniferum (Opium poppy), this protein is Salutaridine synthase.